The following is a 613-amino-acid chain: Zinc metalloproteinase-disintegrin-like MTP4 (613 aa).

Positions 1-20 (MIEVLLVTICFTVFPYQGSS) are cleaved as a signal peptide. A propeptide spanning residues 21–191 (IILESGNVND…DEPIEKISQL (171 aa)) is cleaved from the precursor. The region spanning 205–401 (KYIELYVVVD…VRPQCILNKP (197 aa)) is the Peptidase M12B domain. Residue E208 coordinates Ca(2+). N-linked (GlcNAc...) asparagine glycosylation is present at N282. D292 contacts Ca(2+). Cystine bridges form between C316-C396, C356-C380, and C358-C363. Zn(2+) is bound by residues H341, H345, and H351. Positions 396, 399, 414, 416, 418, 421, and 424 each coordinate Ca(2+). One can recognise a Disintegrin domain in the interval 409–495 (PPVCGNYFVE…KCPTDSFQRN (87 aa)). Disulfide bonds link C412-C441, C423-C436, C425-C431, C435-C458, C449-C455, C454-C480, C467-C487, C474-C506, C499-C511, C518-C568, C533-C575, C543-C577, C546-C556, C563-C601, and C595-C606. N437 is a glycosylation site (N-linked (GlcNAc...) asparagine). The D/ECD-tripeptide motif lies at 473 to 475 (DCD). D475, L476, E478, and D490 together coordinate Ca(2+). The tract at residues 561 to 574 (KMCGKLLCEKGNAT) is hypervariable region that may play important roles toward cell migration. N572 is a glycosylation site (N-linked (GlcNAc...) asparagine).

The protein belongs to the venom metalloproteinase (M12B) family. P-III subfamily. In terms of assembly, monomer. The cofactor is Zn(2+). Expressed by the venom gland.

The protein resides in the secreted. In terms of biological role, snake venom zinc metalloproteinase that may impair hemostasis in the prey. The protein is Zinc metalloproteinase-disintegrin-like MTP4 of Drysdalia coronoides (White-lipped snake).